A 191-amino-acid chain; its full sequence is Potassium-transporting ATPase KdpC subunit (191 aa).

Residues 13–35 (VLFTGLCGLAYPLAITGVAQAVL) form a helical membrane-spanning segment. Positions 112–132 (SGPVPADAVTSSASGLDPDIS) are disordered.

Belongs to the KdpC family. The system is composed of three essential subunits: KdpA, KdpB and KdpC.

The protein resides in the cell inner membrane. Its function is as follows. Part of the high-affinity ATP-driven potassium transport (or Kdp) system, which catalyzes the hydrolysis of ATP coupled with the electrogenic transport of potassium into the cytoplasm. This subunit acts as a catalytic chaperone that increases the ATP-binding affinity of the ATP-hydrolyzing subunit KdpB by the formation of a transient KdpB/KdpC/ATP ternary complex. This chain is Potassium-transporting ATPase KdpC subunit, found in Allorhizobium ampelinum (strain ATCC BAA-846 / DSM 112012 / S4) (Agrobacterium vitis (strain S4)).